The chain runs to 314 residues: Putative S-adenosyl-L-methionine-dependent methyltransferase MAV_4441 (314 aa).

Residues D138 and 167 to 168 (DL) contribute to the S-adenosyl-L-methionine site.

It belongs to the UPF0677 family.

In terms of biological role, exhibits S-adenosyl-L-methionine-dependent methyltransferase activity. This Mycobacterium avium (strain 104) protein is Putative S-adenosyl-L-methionine-dependent methyltransferase MAV_4441.